Here is a 593-residue protein sequence, read N- to C-terminus: 3-hydroxy-3-methylglutaryl-coenzyme A reductase (593 aa).

The interval 1–36 is disordered; that stretch reads MDVRRRSINSIHQIPSVGGTAPPMLKPKQPTKVDAV. 2 consecutive transmembrane segments (helical) span residues 52–72 and 94–114; these read LYIT…YLLV and AIFT…IGLV. The segment at 115–177 is linker; the sequence is QPFTSRSSHD…PVPISPPSSE (63 aa). Positions 178-593 are catalytic; it reads EDEEIIKSVV…SNKDVTKASS (416 aa). The active-site Charge relay system is the E272. An N-linked (GlcNAc...) asparagine glycan is attached at N336. K404 functions as the Charge relay system in the catalytic mechanism. Residue N449 is glycosylated (N-linked (GlcNAc...) asparagine). The Charge relay system role is filled by D480. Residue H578 is the Proton donor of the active site. Residue N582 is glycosylated (N-linked (GlcNAc...) asparagine).

Belongs to the HMG-CoA reductase family.

It is found in the endoplasmic reticulum membrane. The catalysed reaction is (R)-mevalonate + 2 NADP(+) + CoA = (3S)-3-hydroxy-3-methylglutaryl-CoA + 2 NADPH + 2 H(+). The protein operates within metabolic intermediate biosynthesis; (R)-mevalonate biosynthesis; (R)-mevalonate from acetyl-CoA: step 3/3. Catalyzes the synthesis of mevalonate. The specific precursor of all isoprenoid compounds present in plants. This is 3-hydroxy-3-methylglutaryl-coenzyme A reductase from Camptotheca acuminata (Happy tree).